Reading from the N-terminus, the 354-residue chain is uncharacterized protein (354 aa).

The N-terminal stretch at 1–21 (MFQKKTYAVFLILLLMMFTAA) is a signal peptide. The N-palmitoyl cysteine moiety is linked to residue C22. Residue C22 is the site of S-diacylglycerol cysteine attachment.

The protein resides in the cell membrane. It localises to the membrane raft. This is an uncharacterized protein from Bacillus subtilis (strain 168).